The chain runs to 530 residues: Estrogen receptor beta (530 aa).

Residues 1–148 (MDIKNSPSSL…GPSSKRDAHF (148 aa)) are modulating. Phosphoserine; alternate is present on Ser-61. Ser-61 carries O-linked (GlcNAc) serine; alternate glycosylation. 2 positions are modified to phosphoserine; by MAPK: Ser-87 and Ser-105. NR C4-type zinc fingers lie at residues 149–169 (CAVC…CEGC) and 185–209 (CPAT…LRKC). A DNA-binding region (nuclear receptor) is located at residues 149-214 (CAVCSDYASG…RLRKCYEVGM (66 aa)). An NR LBD domain is found at 264-498 (SPEQLVLTLL…DLLLEMMNAH (235 aa)). The segment at 507–530 (ITGSECSPAEDSKSTEGSQNPQSP) is disordered. Residues 521–530 (TEGSQNPQSP) show a composition bias toward polar residues.

The protein belongs to the nuclear hormone receptor family. NR3 subfamily. As to quaternary structure, binds DNA as a homodimer. Can form a heterodimer with ESR1. Interacts with NCOA1, NCOA3, NCOA5 and NCOA6 coactivators, leading to a strong increase of transcription of target genes. Interacts with UBE1C and AKAP13. Interacts with DNTTIP2. Interacts with CCDC62 in the presence of estradiol/E2; this interaction seems to enhance the transcription of target genes. Interacts with DNAAF4. Interacts with PRMT2. Interacts with CCAR2 (via N-terminus) in a ligand-independent manner. Interacts with RBM39, in the presence of estradiol (E2). Interacts with STUB1/CHIP. Phosphorylation at Ser-87 and Ser-105 recruits NCOA1.

The protein resides in the nucleus. Functionally, nuclear hormone receptor. Binds estrogens with an affinity similar to that of ESR1/ER-alpha, and activates expression of reporter genes containing estrogen response elements (ERE) in an estrogen-dependent manner. This chain is Estrogen receptor beta (ESR2), found in Callithrix jacchus (White-tufted-ear marmoset).